We begin with the raw amino-acid sequence, 214 residues long: Glycerol-3-phosphate acyltransferase (214 aa).

5 consecutive transmembrane segments (helical) span residues 8–28, 70–90, 111–131, 144–164, and 165–185; these read LILA…QIFF, LLPL…LIAV, AGVV…IFIV, IVVA…GIIL, and PSYD…ILIR.

It belongs to the PlsY family. As to quaternary structure, probably interacts with PlsX.

Its subcellular location is the cell membrane. It carries out the reaction an acyl phosphate + sn-glycerol 3-phosphate = a 1-acyl-sn-glycero-3-phosphate + phosphate. It participates in lipid metabolism; phospholipid metabolism. Catalyzes the transfer of an acyl group from acyl-phosphate (acyl-PO(4)) to glycerol-3-phosphate (G3P) to form lysophosphatidic acid (LPA). This enzyme utilizes acyl-phosphate as fatty acyl donor, but not acyl-CoA or acyl-ACP. The sequence is that of Glycerol-3-phosphate acyltransferase from Streptococcus gordonii (strain Challis / ATCC 35105 / BCRC 15272 / CH1 / DL1 / V288).